Reading from the N-terminus, the 240-residue chain is MNKNVVIKSLATLTILTSVTGIGTTLVEEVQQTAKAENNVTKIQDTNIFPYTGVVAFKSATGFVVGKNTILTNKHVSKNYKVGDRITAHPNSDKGNGGIYSIKKIINYPGKEDVSVIQVEERAIERGPKGFNFNDNVTPFKYAAGAKAGERIKVIGYPHPYKNKYVLYESTGPVMSVEGSSIVYSAHTESGNSGSPVLNSNNELVGIHFASDVKNDDNRNAYGVYFTPEIKKFIAENIDK.

Positions M1 to A36 are cleaved as a signal peptide. Catalysis depends on charge relay system residues H75, D113, and S193.

It belongs to the peptidase S1B family.

It is found in the secreted. Serine protease that cleaves specifically after the sequence Trp-Glu-Leu-Gln. The chain is Serine protease SplB (splB) from Staphylococcus aureus (strain Mu3 / ATCC 700698).